The sequence spans 218 residues: Large ribosomal subunit protein uL3 (218 aa).

Positions 127-167 (GFSRGPMSHGSKNHRLPGSIGAGTTPGRVYPGKRMAGRMGG) are disordered.

This sequence belongs to the universal ribosomal protein uL3 family. In terms of assembly, part of the 50S ribosomal subunit. Forms a cluster with proteins L14 and L19.

One of the primary rRNA binding proteins, it binds directly near the 3'-end of the 23S rRNA, where it nucleates assembly of the 50S subunit. The polypeptide is Large ribosomal subunit protein uL3 (Prochlorococcus marinus (strain NATL1A)).